The sequence spans 157 residues: Putative pre-16S rRNA nuclease (157 aa).

Belongs to the YqgF nuclease family.

It localises to the cytoplasm. In terms of biological role, could be a nuclease involved in processing of the 5'-end of pre-16S rRNA. This is Putative pre-16S rRNA nuclease from Orientia tsutsugamushi (strain Ikeda) (Rickettsia tsutsugamushi).